The sequence spans 374 residues: MTADEEETFTTFNEFRSDTFTVPTRAMVEDGFMNATFGDSVYQEDETTLRLESKMCEITGKPAALFCVSGTMSNQIGLRANLVQPPYSILCDYRAHVFLHEAGGLATLSQAMVHPVRPSNGNYLTFEDVLGNVTYDDDGDIHAAPTKVISLENTLHGIIIPIEEIRKISEFCRENDIRLHLDGARLWNASVATGISIKEYCSYFDSVSLCLSKSLGAPIGSVLVGDEKFIRKANHFKKQSGGGIRQAGIMSAMAIHAIDYNLSKLELSHNYAKQIGDFCQEHGIKLESPVDTSLVFLDLKANKMDPNRLVELGRTKYNVKLMGQRIACHFQLSQESVDNVKKCILECLEYHQKHPHKDDGRNNKKMYSLDAIKK.

The residue at position 213 (Lys213) is an N6-(pyridoxal phosphate)lysine. A disordered region spans residues 354 to 374 (HPHKDDGRNNKKMYSLDAIKK).

The protein belongs to the threonine aldolase family. Homotetramer. The cofactor is pyridoxal 5'-phosphate.

The catalysed reaction is L-threonine = acetaldehyde + glycine. It catalyses the reaction L-allo-threonine = acetaldehyde + glycine. It participates in amino-acid degradation; L-threonine degradation via aldolase pathway; acetaldehyde and glycine from L-threonine: step 1/1. The polypeptide is Low-specificity L-threonine aldolase (GLY1) (Candida albicans (Yeast)).